The sequence spans 185 residues: Large ribosomal subunit protein uL5 (185 aa).

The protein belongs to the universal ribosomal protein uL5 family. Part of the 50S ribosomal subunit; part of the 5S rRNA/L5/L18/L25 subcomplex. Contacts the 5S rRNA and the P site tRNA. Forms a bridge to the 30S subunit in the 70S ribosome.

Its function is as follows. This is one of the proteins that bind and probably mediate the attachment of the 5S RNA into the large ribosomal subunit, where it forms part of the central protuberance. In the 70S ribosome it contacts protein S13 of the 30S subunit (bridge B1b), connecting the 2 subunits; this bridge is implicated in subunit movement. Contacts the P site tRNA; the 5S rRNA and some of its associated proteins might help stabilize positioning of ribosome-bound tRNAs. The sequence is that of Large ribosomal subunit protein uL5 from Rhodopseudomonas palustris (strain HaA2).